A 418-amino-acid polypeptide reads, in one-letter code: Actin-related protein 3 (418 aa).

Ala2 is subject to N-acetylalanine.

The protein belongs to the actin family. ARP3 subfamily. As to quaternary structure, component of the Arp2/3 complex composed of ACTR2/ARP2, ACTR3/ARP3, ARPC1B/p41-ARC, ARPC2/p34-ARC, ARPC3/p21-ARC, ARPC4/p20-ARC and ARPC5/p16-ARC. As to expression, detected in fibroblasts.

The protein localises to the cytoplasm. Its subcellular location is the cytoskeleton. The protein resides in the cell projection. It is found in the nucleus. Functionally, ATP-binding component of the Arp2/3 complex, a multiprotein complex that mediates actin polymerization upon stimulation by nucleation-promoting factor (NPF). The Arp2/3 complex mediates the formation of branched actin networks in the cytoplasm, providing the force for cell motility. Seems to contact the pointed end of the daughter actin filament. In addition to its role in the cytoplasmic cytoskeleton, the Arp2/3 complex also promotes actin polymerization in the nucleus, thereby regulating gene transcription and repair of damaged DNA. The Arp2/3 complex promotes homologous recombination (HR) repair in response to DNA damage by promoting nuclear actin polymerization, leading to drive motility of double-strand breaks (DSBs). This is Actin-related protein 3 (ACTR3) from Gallus gallus (Chicken).